A 343-amino-acid chain; its full sequence is Inositol 2-dehydrogenase 1 (343 aa).

It belongs to the Gfo/Idh/MocA family. In terms of assembly, homotetramer.

The catalysed reaction is myo-inositol + NAD(+) = scyllo-inosose + NADH + H(+). Involved in the oxidation of myo-inositol (MI) to 2-keto-myo-inositol (2KMI or 2-inosose). This Mycolicibacterium vanbaalenii (strain DSM 7251 / JCM 13017 / BCRC 16820 / KCTC 9966 / NRRL B-24157 / PYR-1) (Mycobacterium vanbaalenii) protein is Inositol 2-dehydrogenase 1.